Consider the following 313-residue polypeptide: UbiA prenyltransferase claS (313 aa).

A run of 2 helical transmembrane segments spans residues 30–52 and 57–79; these read FAGT…RALL and TFGT…GCIW. The short motif at 81–88 is the NDxxDxxxD element; sequence DILDQDFD. Mg(2+) contacts are provided by Asp-84 and Asp-88. Helical transmembrane passes span 99–121, 131–148, and 155–177; these read IASG…FILM, AWMI…IYPL, and WPQA…YTTG. Residues Asp-205 and Asp-209 each contribute to the Mg(2+) site. The short motif at 205–209 is the DxxxD element; the sequence is DKKDD. The YxxxK signature appears at 205–209; it reads DKKDD. Transmembrane regions (helical) follow at residues 227-247, 250-270, and 293-313; these read PVLS…GILN, ELPY…TQLW, and AIVW…GAIM.

This sequence belongs to the UbiA prenyltransferase family. Requires Mg(2+) as cofactor.

It is found in the membrane. It carries out the reaction hydroquinone + (2E)-geranyl diphosphate = (2E)-geranylhydroquinone + diphosphate. It functions in the pathway secondary metabolite biosynthesis; terpenoid biosynthesis. Functionally, prenyltransferase; part of the gene cluster that mediates the biosynthesis of clavilactone A, a meroterpenoid that features a unique benzo-fused ten-membered carbocyclic ring unit with an alpha,beta-epoxy-gamma-lactone moiety, forming an intriguing 10/5/3 tricyclic nested skeleton. ClaR, ClaS and ClaT are sufficient to produce clavilactone A. Within the pathway, claS acts as an atypical UbiA prenyltransferase that transfers geranyl pyrophosphate (GPP) to hydroquinone (HYQ) instead of p-hydroxybenzoic acid (PHB), producing the first intermediate geranylhydroquinone. The cytochrome P450 monooxygenase claR then catalyzes the diradical coupling reaction between the intramolecular hydroquinone and allyl moieties to form the benzo-fused ten-membered carbocyclic ring unit of wigantol. Finally the cytochrome P450 monooxygenase claT exquisitely and stereoselectively assembles the alpha,beta-epoxy-gamma-lactone moiety, producing clavilactone A via arnebinol A. This Ampulloclitocybe clavipes (Club foot) protein is UbiA prenyltransferase claS.